Here is an 82-residue protein sequence, read N- to C-terminus: Small ribosomal subunit protein bS18 (82 aa).

It belongs to the bacterial ribosomal protein bS18 family. Part of the 30S ribosomal subunit. Forms a tight heterodimer with protein bS6.

Its function is as follows. Binds as a heterodimer with protein bS6 to the central domain of the 16S rRNA, where it helps stabilize the platform of the 30S subunit. This chain is Small ribosomal subunit protein bS18, found in Bifidobacterium adolescentis (strain ATCC 15703 / DSM 20083 / NCTC 11814 / E194a).